The sequence spans 1038 residues: Kinesin-like protein KIF17 (1038 aa).

Positions Ser5–Ile335 constitute a Kinesin motor domain. Gly91 to Ser98 lines the ATP pocket. A coiled-coil region spans residues Lys346–Val470. Disordered stretches follow at residues Thr379–Asp401, Leu503–Glu559, and Asp636–Pro657. Composition is skewed to polar residues over residues Ser533–Ser551 and Asp636–Ser651. Residues Gln748–Thr855 are a coiled coil. Disordered regions lie at residues Val916–Gln940 and Met976–Leu1038. Positions Asn983–Pro1000 are enriched in low complexity.

This sequence belongs to the TRAFAC class myosin-kinesin ATPase superfamily. Kinesin family. In terms of assembly, homodimer. Interacts with APBA1 (via PDZ domain); the interaction is direct and is required for association of KIF17 with the cargo that is to be transported. Interacts with IFT B complex components IFT52 and IFT57. Interacts with IFT70B. Interacts with PIWIL1. Interacts with TBATA. As to expression, highly expressed in the gray matter of the brain, especially in the hippocampus.

The protein resides in the cytoplasm. Its subcellular location is the cytoskeleton. It localises to the cell projection. The protein localises to the cilium. It is found in the dendrite. Its function is as follows. Dendrite-specific motor protein which, in association with the Apba1-containing complex (LIN-10-LIN-2-LIN-7 complex), transports vesicles containing N-methyl-D-aspartate (NMDA) receptor subunit NR2B along microtubules. The polypeptide is Kinesin-like protein KIF17 (Kif17) (Mus musculus (Mouse)).